Consider the following 122-residue polypeptide: Small ribosomal subunit protein bS16 (122 aa).

Residues 81–122 (GLMKRDAKNNPKKGEPGEKAKERAKERAEKAAAGSTEDAAAE) form a disordered region. A compositionally biased stretch (basic and acidic residues) spans 83–110 (MKRDAKNNPKKGEPGEKAKERAKERAEK). Residues 111-122 (AAAGSTEDAAAE) show a composition bias toward low complexity.

It belongs to the bacterial ribosomal protein bS16 family.

This is Small ribosomal subunit protein bS16 from Xanthobacter autotrophicus (strain ATCC BAA-1158 / Py2).